A 396-amino-acid polypeptide reads, in one-letter code: Glutamyl-tRNA reductase (396 aa).

Substrate is bound by residues 45–48 (TCNR), Ser101, 106–108 (EDQ), and Gln112. Cys46 (nucleophile) is an active-site residue. 177–182 (GFGDVG) contacts NADP(+).

It belongs to the glutamyl-tRNA reductase family. Homodimer.

The enzyme catalyses (S)-4-amino-5-oxopentanoate + tRNA(Glu) + NADP(+) = L-glutamyl-tRNA(Glu) + NADPH + H(+). Its pathway is porphyrin-containing compound metabolism; protoporphyrin-IX biosynthesis; 5-aminolevulinate from L-glutamyl-tRNA(Glu): step 1/2. Functionally, catalyzes the NADPH-dependent reduction of glutamyl-tRNA(Glu) to glutamate 1-semialdehyde (GSA). The polypeptide is Glutamyl-tRNA reductase (Clostridium acetobutylicum (strain ATCC 824 / DSM 792 / JCM 1419 / IAM 19013 / LMG 5710 / NBRC 13948 / NRRL B-527 / VKM B-1787 / 2291 / W)).